The following is a 487-amino-acid chain: L-tartrate/succinate antiporter (487 aa).

14 helical membrane passes run 10-30 (YLAP…AGLE), 33-53 (TWLY…EPVP), 54-74 (GAVV…WLLF), 93-113 (WAVS…FMFG), 137-157 (TLFL…VTPS), 189-209 (IGSY…AIFL), 236-256 (FLGM…LAYV), 292-312 (LMVG…AAMV), 313-333 (GYSV…DIVS), 340-360 (VFFW…TGFI), 370-390 (SLSG…FYLL), 393-413 (FFAS…AAAL), 418-438 (IPLP…SILT), and 465-485 (IFGL…MPVV).

It belongs to the SLC13A/DASS transporter (TC 2.A.47) family. DIT1 subfamily.

It is found in the cell inner membrane. The catalysed reaction is (2R,3R)-tartrate(out) + succinate(in) = (2R,3R)-tartrate(in) + succinate(out). In terms of biological role, catalyzes the uptake of tartrate in exchange for intracellular succinate. Essential for anaerobic L-tartrate fermentation. This Escherichia coli O6:K15:H31 (strain 536 / UPEC) protein is L-tartrate/succinate antiporter (ttdT).